A 77-amino-acid polypeptide reads, in one-letter code: Small ribosomal subunit protein uS17c (77 aa).

Belongs to the universal ribosomal protein uS17 family. Part of the 30S ribosomal subunit.

It is found in the plastid. It localises to the chloroplast. Its function is as follows. One of the primary rRNA binding proteins, it binds specifically to the 5'-end of 16S ribosomal RNA. This chain is Small ribosomal subunit protein uS17c (rps17), found in Cyanidium caldarium (Red alga).